Reading from the N-terminus, the 262-residue chain is Hydroxyethylthiazole kinase (262 aa).

Residue Met-43 participates in substrate binding. ATP contacts are provided by Arg-118 and Thr-164. Residue Ala-191 participates in substrate binding.

The protein belongs to the Thz kinase family. The cofactor is Mg(2+).

The catalysed reaction is 5-(2-hydroxyethyl)-4-methylthiazole + ATP = 4-methyl-5-(2-phosphooxyethyl)-thiazole + ADP + H(+). It functions in the pathway cofactor biosynthesis; thiamine diphosphate biosynthesis; 4-methyl-5-(2-phosphoethyl)-thiazole from 5-(2-hydroxyethyl)-4-methylthiazole: step 1/1. Its function is as follows. Catalyzes the phosphorylation of the hydroxyl group of 4-methyl-5-beta-hydroxyethylthiazole (THZ). The protein is Hydroxyethylthiazole kinase of Cereibacter sphaeroides (strain ATCC 17025 / ATH 2.4.3) (Rhodobacter sphaeroides).